We begin with the raw amino-acid sequence, 238 residues long: Deoxyribose-phosphate aldolase (238 aa).

The Proton donor/acceptor role is filled by Asp102. The active-site Schiff-base intermediate with acetaldehyde is Lys164. Residue Lys193 is the Proton donor/acceptor of the active site.

The protein belongs to the DeoC/FbaB aldolase family. DeoC type 1 subfamily.

The protein localises to the cytoplasm. It catalyses the reaction 2-deoxy-D-ribose 5-phosphate = D-glyceraldehyde 3-phosphate + acetaldehyde. The protein operates within carbohydrate degradation; 2-deoxy-D-ribose 1-phosphate degradation; D-glyceraldehyde 3-phosphate and acetaldehyde from 2-deoxy-alpha-D-ribose 1-phosphate: step 2/2. Its function is as follows. Catalyzes a reversible aldol reaction between acetaldehyde and D-glyceraldehyde 3-phosphate to generate 2-deoxy-D-ribose 5-phosphate. This is Deoxyribose-phosphate aldolase from Rhodospirillum rubrum (strain ATCC 11170 / ATH 1.1.1 / DSM 467 / LMG 4362 / NCIMB 8255 / S1).